Here is a 172-residue protein sequence, read N- to C-terminus: Large ribosomal subunit protein uL10 (172 aa).

The protein belongs to the universal ribosomal protein uL10 family. Part of the ribosomal stalk of the 50S ribosomal subunit. The N-terminus interacts with L11 and the large rRNA to form the base of the stalk. The C-terminus forms an elongated spine to which L12 dimers bind in a sequential fashion forming a multimeric L10(L12)X complex.

Its function is as follows. Forms part of the ribosomal stalk, playing a central role in the interaction of the ribosome with GTP-bound translation factors. The protein is Large ribosomal subunit protein uL10 of Bartonella bacilliformis (strain ATCC 35685 / KC583 / Herrer 020/F12,63).